The chain runs to 298 residues: Arginase (298 aa).

Positions 98, 121, 123, and 125 each coordinate Mn(2+). Substrate is bound by residues 123 to 127, 134 to 136, and Asp177; these read HGDLN and SGN. Mn(2+)-binding residues include Asp225 and Asp227. Substrate is bound by residues Thr239 and Glu270.

The protein belongs to the arginase family. Mn(2+) is required as a cofactor.

The enzyme catalyses L-arginine + H2O = urea + L-ornithine. It functions in the pathway nitrogen metabolism; urea cycle; L-ornithine and urea from L-arginine: step 1/1. This chain is Arginase (rocF), found in Brevibacillus brevis (Bacillus brevis).